The sequence spans 213 residues: Probable aspartate aminotransferase (213 aa).

The L-aspartate site is built by glycine 47, tryptophan 133, and asparagine 183.

Belongs to the class-I pyridoxal-phosphate-dependent aminotransferase family. Homodimer. Requires pyridoxal 5'-phosphate as cofactor.

The protein localises to the cytoplasm. The enzyme catalyses L-aspartate + 2-oxoglutarate = oxaloacetate + L-glutamate. This Streptomyces griseus protein is Probable aspartate aminotransferase (aspC).